The sequence spans 237 residues: CD209 antigen-like protein D (237 aa).

Topologically, residues 1-54 (MSDSMESKTQQVVIPEDEECLMSGTRYSDISSRLQTKFGIKSLAEYTKQSRNPL) are cytoplasmic. The helical; Signal-anchor for type II membrane protein transmembrane segment at 55–75 (VLQLLSFLFLAGLLLIILILV) threads the bilayer. At 76 to 237 (SKVPSSEVQN…KVSTSSCTTK (162 aa)) the chain is on the extracellular side. C106 and C117 are joined by a disulfide. Positions 112–227 (FFNGSCYFFS…CDKLLFWICK (116 aa)) constitute a C-type lectin domain. Residues N114 and N129 are each glycosylated (N-linked (GlcNAc...) asparagine). Disulfide bonds link C134/C226 and C205/C218. Ca(2+)-binding residues include E196, N198, E203, N214, and D215.

The protein localises to the membrane. Its function is as follows. Probable pathogen-recognition receptor. May mediate the endocytosis of pathogens which are subsequently degraded in lysosomal compartments. May recognize in a calcium-dependent manner high mannose N-linked oligosaccharides in a variety of pathogen antigens. The polypeptide is CD209 antigen-like protein D (Cd209d) (Mus musculus (Mouse)).